A 262-amino-acid chain; its full sequence is Apolipoprotein A-I (262 aa).

The signal sequence occupies residues 1-18 (MKAVVLTLAVLFLTGSQA). A run of 2 repeats spans residues 67-88 (LKLL…EQLG) and 89-110 (PVTQ…QEMN). The interval 67–262 (LKLLDNWDTL…DEASKKLNAQ (196 aa)) is 10 X approximate tandem repeats. At Met109 the chain carries Methionine sulfoxide. Residues 111–121 (KDLEEVKQKVQ) form a 3; half-length repeat. Repeat copies occupy residues 122 to 142 (PYLD…RQKV), 144 to 165 (PLGE…DRLS), 166 to 184 (PLAQ…KQLA), 185 to 206 (PYSD…EGGG), and 207 to 227 (SLAE…EKAK). A 9; half-length repeat occupies 228 to 238 (PALEDLRQGLM). Met238 bears the Methionine sulfoxide mark. The stretch at 239–262 (PVLESLKVSILAAIDEASKKLNAQ) is repeat 10.

This sequence belongs to the apolipoprotein A1/A4/E family. In terms of assembly, homodimer. Interacts with APOA1BP and CLU. Component of a sperm activating protein complex (SPAP), consisting of APOA1, an immunoglobulin heavy chain, an immunoglobulin light chain and albumin. Interacts with NDRG1. Interacts with SCGB3A2. Interacts with NAXE and YJEFN3. Glycosylated. In terms of processing, palmitoylated. Post-translationally, phosphorylation sites are present in the extracellular medium. In terms of tissue distribution, major protein of plasma HDL, also found in chylomicrons.

The protein localises to the secreted. Participates in the reverse transport of cholesterol from tissues to the liver for excretion by promoting cholesterol efflux from tissues and by acting as a cofactor for the lecithin cholesterol acyltransferase (LCAT). As part of the SPAP complex, activates spermatozoa motility. The polypeptide is Apolipoprotein A-I (APOA1) (Pantholops hodgsonii (Chiru)).